The primary structure comprises 395 residues: Elongation factor Tu (395 aa).

The tr-type G domain occupies 10–204; that stretch reads KPHVNIGTIG…AVDSYIPTPQ (195 aa). Residues 19 to 26 form a G1 region; it reads GHVDHGKT. Residue 19–26 participates in GTP binding; the sequence is GHVDHGKT. A Mg(2+)-binding site is contributed by Thr26. A G2 region spans residues 60-64; sequence GITIN. The tract at residues 81 to 84 is G3; that stretch reads DCPG. GTP is bound by residues 81-85 and 136-139; these read DCPGH and NKCD. A G4 region spans residues 136–139; sequence NKCD. Residues 174 to 176 form a G5 region; the sequence is SAL.

Belongs to the TRAFAC class translation factor GTPase superfamily. Classic translation factor GTPase family. EF-Tu/EF-1A subfamily. As to quaternary structure, monomer.

Its subcellular location is the cytoplasm. The enzyme catalyses GTP + H2O = GDP + phosphate + H(+). Functionally, GTP hydrolase that promotes the GTP-dependent binding of aminoacyl-tRNA to the A-site of ribosomes during protein biosynthesis. This is Elongation factor Tu from Symbiobacterium thermophilum (strain DSM 24528 / JCM 14929 / IAM 14863 / T).